The chain runs to 211 residues: Putative hydrolase SMU_367 (211 aa).

An N-terminal signal peptide occupies residues 1–29 (MKKQFLEKAVFTVAATAATVVLGNKMADA). One can recognise a LysM domain in the interval 30–74 (DTYTLQEGDSFFSVAQRYHMDAYELASMNGKDITSLILPGQTLTV). Positions 77–101 (SAAPDNQAAAPTDTTQATTETNDAN) are disordered. The segment covering 78–101 (AAPDNQAAAPTDTTQATTETNDAN) has biased composition (low complexity). Positions 85–209 (AAPTDTTQAT…GTPGSVSYIY (125 aa)) constitute a Peptidase C51 domain.

This is Putative hydrolase SMU_367 from Streptococcus mutans serotype c (strain ATCC 700610 / UA159).